Consider the following 214-residue polypeptide: MTKLFEPAACQVDLRTGAMSAATGAYQKRFRDLAGLYADEAAFSAMRENWNDTVVYEVSEFRPNERSGDLIFGTTRMLPGKVGDEYFVTRGHIHRQSDRPEIYYGQKGSGLMLLESPEGEVRIVAIDARTVCYVPPYWIHRSVNIGGEELVMLFCYPADSGQDYDCIAKAGGMRVRIVDDGEGGWKQVDNSSWRKRDAATIAALYGLEKKEKSA.

Residues H92, H94, E101, and H140 each contribute to the Fe cation site.

Belongs to the archaeal-type GPI family. In terms of assembly, homodimer.

It localises to the cytoplasm. It carries out the reaction alpha-D-glucose 6-phosphate = beta-D-fructose 6-phosphate. The protein operates within carbohydrate degradation; glycolysis; D-glyceraldehyde 3-phosphate and glycerone phosphate from D-glucose: step 2/4. This Sinorhizobium medicae (strain WSM419) (Ensifer medicae) protein is Glucose-6-phosphate isomerase.